The chain runs to 1389 residues: Carboxypeptidase D (1389 aa).

An N-terminal signal peptide occupies residues 1–25 (MAGAARGLLWAALSLCLLPEPLRAA). At 26-1308 (HIKKAEAAAA…ENRIFGLPRE (1283 aa)) the chain is on the extracellular side. The Peptidase M14 1 domain occupies 46–383 (RYLHAAELGQ…ESLLTFIEKV (338 aa)). The segment at 95 to 133 (LPEARQDGEKKKKEEEEEEEEEEGEEGGGGALPGRPQVK) is disordered. Over residues 96–108 (PEARQDGEKKKKE) the composition is skewed to basic and acidic residues. The span at 109–120 (EEEEEEEEEGEE) shows a compositional bias: acidic residues. 2 residues coordinate Zn(2+): H139 and E142. N172 is a glycosylation site (N-linked (GlcNAc...) asparagine). The tract at residues 188–235 (ERAREGDCGGGGGGGGEGGGEPGGRENSRGRDLNRSFPDQFGSAQPDL) is disordered. Positions 195 to 209 (CGGGGGGGGEGGGEP) are enriched in gly residues. The segment covering 210–221 (GGRENSRGRDLN) has biased composition (basic and acidic residues). N221 carries N-linked (GlcNAc...) asparagine glycosylation. H260 provides a ligand contact to Zn(2+). The Proton donor/acceptor role is filled by E353. Residues N402, N413, N432, and N472 are each glycosylated (N-linked (GlcNAc...) asparagine). Residues 511-801 (RHHHFSDMEI…RSLLQFIKQV (291 aa)) enclose the Peptidase M14 2 domain. The Zn(2+) site is built by H573 and E576. Residues 614-639 (SMNPDGYEKSQEGDRGGTVGRNNSNN) form a disordered region. The span at 619 to 628 (GYEKSQEGDR) shows a compositional bias: basic and acidic residues. N635 carries N-linked (GlcNAc...) asparagine glycosylation. H680 is a binding site for Zn(2+). E771 serves as the catalytic Proton donor/acceptor. N-linked (GlcNAc...) asparagine glycans are attached at residues N820, N876, N958, N981, N1073, and N1151. Residues 935–1220 (RYRPYKDLSE…KSLLSMLVEV (286 aa)) form the Peptidase M14 3 domain. A helical membrane pass occupies residues 1309-1329 (LVVTVAGASMSALVLTACIIW). Residues C1326, C1330, and C1332 are each lipidated (S-palmitoyl cysteine). The Cytoplasmic portion of the chain corresponds to 1330–1389 (CVCSIKSNRHKDGFPTLRQHHDDYEDEIRMMSTGSKKSLLSHEFQDETDTEEETLYSSKH). The segment at 1367–1389 (SLLSHEFQDETDTEEETLYSSKH) is disordered.

Belongs to the peptidase M14 family. In terms of assembly, binds to pre-S, hepatitis B virus large envelope protein, via the carboxypeptidase-like domain. Requires Zn(2+) as cofactor. In terms of processing, the N-terminus is blocked. Expressed in liver, lung, kidney, heart, stomach, pancreas, spleen, gall bladder and intestine, but not in skeletal muscle.

Its subcellular location is the cell membrane. It carries out the reaction Releases C-terminal Arg and Lys from polypeptides.. This chain is Carboxypeptidase D (CPD), found in Anas platyrhynchos (Mallard).